The primary structure comprises 346 residues: Actin-like protein 10 (346 aa).

It belongs to the actin family.

The sequence is that of Actin-like protein 10 (Actl10) from Mus musculus (Mouse).